A 244-amino-acid chain; its full sequence is Chalcone--flavanone isomerase (244 aa).

Positions 45, 110, and 187 each coordinate substrate.

The protein belongs to the chalcone isomerase family.

It carries out the reaction a chalcone = a flavanone.. Its pathway is secondary metabolite biosynthesis; flavonoid biosynthesis. In terms of biological role, catalyzes the intramolecular cyclization of bicyclic chalcones into tricyclic (S)-flavanones. Responsible for the isomerization of 4,2',4',6'-tetrahydroxychalcone (also termed chalcone) into naringenin. In Nicotiana tabacum (Common tobacco), this protein is Chalcone--flavanone isomerase (CHI).